The following is a 472-amino-acid chain: Cysteine--tRNA ligase (472 aa).

Cys29 is a Zn(2+) binding site. Positions 31–41 match the 'HIGH' region motif; it reads ITVYDYCHLGH. Residues Cys214, His239, and Glu243 each contribute to the Zn(2+) site. The short motif at 271–275 is the 'KMSKS' region element; that stretch reads KMSKS. Lys274 contacts ATP.

Belongs to the class-I aminoacyl-tRNA synthetase family. In terms of assembly, monomer. It depends on Zn(2+) as a cofactor.

Its subcellular location is the cytoplasm. The enzyme catalyses tRNA(Cys) + L-cysteine + ATP = L-cysteinyl-tRNA(Cys) + AMP + diphosphate. This is Cysteine--tRNA ligase from Picosynechococcus sp. (strain ATCC 27264 / PCC 7002 / PR-6) (Agmenellum quadruplicatum).